A 405-amino-acid polypeptide reads, in one-letter code: Acetate kinase (405 aa).

Residue asparagine 7 participates in Mg(2+) binding. Lysine 14 serves as a coordination point for ATP. Arginine 92 provides a ligand contact to substrate. Aspartate 149 serves as the catalytic Proton donor/acceptor. Residues histidine 209–glycine 213 and aspartate 284–arginine 286 contribute to the ATP site. A Mg(2+)-binding site is contributed by glutamate 389.

It belongs to the acetokinase family. As to quaternary structure, homodimer. Requires Mg(2+) as cofactor. Mn(2+) serves as cofactor.

The protein localises to the cytoplasm. The catalysed reaction is acetate + ATP = acetyl phosphate + ADP. Its pathway is metabolic intermediate biosynthesis; acetyl-CoA biosynthesis; acetyl-CoA from acetate: step 1/2. Catalyzes the formation of acetyl phosphate from acetate and ATP. Can also catalyze the reverse reaction. The sequence is that of Acetate kinase from Borrelia garinii subsp. bavariensis (strain ATCC BAA-2496 / DSM 23469 / PBi) (Borreliella bavariensis).